The sequence spans 396 residues: Elongation factor Tu (396 aa).

The region spanning 10–206 (KPHCNIGTIG…AVDAYIPQPE (197 aa)) is the tr-type G domain. Residues 19-26 (GHVDHGKT) form a G1 region. 19–26 (GHVDHGKT) provides a ligand contact to GTP. Residue Thr-26 coordinates Mg(2+). The G2 stretch occupies residues 60-64 (GITIS). Positions 81–84 (DCPG) are G3. GTP is bound by residues 81–85 (DCPGH) and 136–139 (NKCD). Positions 136 to 139 (NKCD) are G4. Positions 174–176 (SAL) are G5.

This sequence belongs to the TRAFAC class translation factor GTPase superfamily. Classic translation factor GTPase family. EF-Tu/EF-1A subfamily. Monomer.

The protein resides in the cytoplasm. The catalysed reaction is GTP + H2O = GDP + phosphate + H(+). Functionally, GTP hydrolase that promotes the GTP-dependent binding of aminoacyl-tRNA to the A-site of ribosomes during protein biosynthesis. In Rhodopseudomonas palustris (strain BisB18), this protein is Elongation factor Tu.